Reading from the N-terminus, the 215-residue chain is Small ribosomal subunit protein uS2 (215 aa).

Belongs to the universal ribosomal protein uS2 family.

The chain is Small ribosomal subunit protein uS2 from Caldivirga maquilingensis (strain ATCC 700844 / DSM 13496 / JCM 10307 / IC-167).